A 126-amino-acid chain; its full sequence is Fluoride-specific ion channel FluC (126 aa).

Helical transmembrane passes span 9-29, 35-55, 63-83, and 94-114; these read LAVF…GFQL, LTAT…LYAI, LLHL…SFVL, and WSIG…AAIL. The Na(+) site is built by Gly-73 and Ser-76.

This sequence belongs to the fluoride channel Fluc/FEX (TC 1.A.43) family.

It is found in the cell inner membrane. It catalyses the reaction fluoride(in) = fluoride(out). With respect to regulation, na(+) is not transported, but it plays an essential structural role and its presence is essential for fluoride channel function. Its function is as follows. Fluoride-specific ion channel. Important for reducing fluoride concentration in the cell, thus reducing its toxicity. The polypeptide is Fluoride-specific ion channel FluC (Ruegeria pomeroyi (strain ATCC 700808 / DSM 15171 / DSS-3) (Silicibacter pomeroyi)).